Reading from the N-terminus, the 183-residue chain is Ribonuclease H (183 aa).

Residues 2–151 enclose the RNase H type-1 domain; sequence SQARFIAFSD…VDQLAQAAAR (150 aa). Mg(2+)-binding residues include D11, E57, D79, and D143.

The protein belongs to the RNase H family. In terms of assembly, monomer. Requires Mg(2+) as cofactor.

It is found in the cytoplasm. It catalyses the reaction Endonucleolytic cleavage to 5'-phosphomonoester.. Endonuclease that specifically degrades the RNA of RNA-DNA hybrids. This is Ribonuclease H from Anaeromyxobacter dehalogenans (strain 2CP-1 / ATCC BAA-258).